The sequence spans 89 residues: Small ribosomal subunit protein uS15 (89 aa).

The protein belongs to the universal ribosomal protein uS15 family. In terms of assembly, part of the 30S ribosomal subunit. Forms a bridge to the 50S subunit in the 70S ribosome, contacting the 23S rRNA.

Its function is as follows. One of the primary rRNA binding proteins, it binds directly to 16S rRNA where it helps nucleate assembly of the platform of the 30S subunit by binding and bridging several RNA helices of the 16S rRNA. In terms of biological role, forms an intersubunit bridge (bridge B4) with the 23S rRNA of the 50S subunit in the ribosome. The sequence is that of Small ribosomal subunit protein uS15 from Burkholderia mallei (strain NCTC 10247).